The following is a 245-amino-acid chain: Geranylgeranylglyceryl phosphate synthase (245 aa).

The Mg(2+) site is built by Asp-20 and Ser-50. Sn-glycerol 1-phosphate-binding positions include 169-175 (YLEAGSG), 202-203 (GG), and 224-225 (GT).

Belongs to the GGGP/HepGP synthase family. Group II subfamily. The cofactor is Mg(2+).

It localises to the cytoplasm. The enzyme catalyses sn-glycerol 1-phosphate + (2E,6E,10E)-geranylgeranyl diphosphate = sn-3-O-(geranylgeranyl)glycerol 1-phosphate + diphosphate. The protein operates within membrane lipid metabolism; glycerophospholipid metabolism. Functionally, prenyltransferase that catalyzes the transfer of the geranylgeranyl moiety of geranylgeranyl diphosphate (GGPP) to the C3 hydroxyl of sn-glycerol-1-phosphate (G1P). This reaction is the first ether-bond-formation step in the biosynthesis of archaeal membrane lipids. This chain is Geranylgeranylglyceryl phosphate synthase, found in Ignicoccus hospitalis (strain KIN4/I / DSM 18386 / JCM 14125).